A 637-amino-acid chain; its full sequence is MADIEELKFDAEVGKVLSLVVHSLYTNKDIFLRELLSNASDACDKLRHEFLSNHDLMEEGEELKVVISVDKDSKQLSICDNGIGMNRDELIANLGTIASSGTQRFLEALGGDKAKGYDLIGKFGVGFYSVFMVASEVVVDTCRAGESVGYRWRSSGDGGFTIEKLGEDVPRGTKITLTLKEDESGFLDKFRIEHVVTTYSDHLGYPVYFLDEKGEEEKLNSGIAIWTKPKAEVTAAEHLEFFRSVAHIGSEPWMVIHNKNEGAIEYTNLLYIPSVKPFDLFHPDRRCSVKLYVNRVFITEDNVQIIPQYLRFIRGVIDSSDLPLNISRETLQNNRIVEKIKTSVTKKVLSALKEKAESDHESYSKFWENFGPVLKEGLCEAMDTESREGVLSVCKFHTSACAAGELVSLADYISRMKPGQESIFYLSGDDLESTKRSPQIEKLVSSGIEVILLVDPVDDFWTSVVSEYKGVPFKSVMRVGEKDLEKCIGASDDSGDKTSEDSGESASDKESIGSFIEYLKKVLDGVVSDVRVSKKLTTSLVCLAVPDNSMDIRMERFLREQKQLNYKGNRILEINIDHPIAKSLLKEHEARGESELLNGIVHLLYDEACIIEGEEIRSTVDFASRINGVLAKIFSSK.

The tract at residues 1-328 (MADIEELKFD…SSDLPLNISR (328 aa)) is a; substrate-binding. Positions 329 to 556 (ETLQNNRIVE…DNSMDIRMER (228 aa)) are b. The disordered stretch occupies residues 488–508 (IGASDDSGDKTSEDSGESASD). Basic and acidic residues predominate over residues 494–508 (SGDKTSEDSGESASD). The c stretch occupies residues 557–637 (FLREQKQLNY…GVLAKIFSSK (81 aa)).

The protein belongs to the heat shock protein 90 family. As to quaternary structure, homodimer.

The protein resides in the cytoplasm. In terms of biological role, molecular chaperone. Has ATPase activity. This Anaplasma phagocytophilum (strain HZ) protein is Chaperone protein HtpG.